The primary structure comprises 168 residues: MSGAGKKIADVAFKASRTIDWDGMAKVLVTDEARREFSNLRRAFDEVNTQLQTKFSQEPEPIDWDYYRKGIGAGIVDKYKEAYDSIEIPKYVDKVTPEYKPKFDALLVELKEAEQKSLKESERLEKEIADVQEISKKLSTMTADEYFEKHPELKKKFDDEIRNDNWGY.

The protein belongs to the ATPase d subunit family. As to quaternary structure, F-type ATPases have 2 components, CF(1) - the catalytic core - and CF(0) - the membrane proton channel. CF(0) seems to have nine subunits: a, b, c, d, e, f, g, F6 and 8 (or A6L).

The protein localises to the mitochondrion. It is found in the mitochondrion inner membrane. Its function is as follows. Mitochondrial membrane ATP synthase (F(1)F(0) ATP synthase or Complex V) produces ATP from ADP in the presence of a proton gradient across the membrane which is generated by electron transport complexes of the respiratory chain. F-type ATPases consist of two structural domains, F(1) - containing the extramembraneous catalytic core, and F(0) - containing the membrane proton channel, linked together by a central stalk and a peripheral stalk. During catalysis, ATP synthesis in the catalytic domain of F(1) is coupled via a rotary mechanism of the central stalk subunits to proton translocation. Part of the complex F(0) domain and the peripheric stalk, which acts as a stator to hold the catalytic alpha(3)beta(3) subcomplex and subunit a/ATP6 static relative to the rotary elements. This chain is ATP synthase subunit d, mitochondrial, found in Arabidopsis thaliana (Mouse-ear cress).